A 787-amino-acid polypeptide reads, in one-letter code: Serine/threonine-protein kinase PLK4 (787 aa).

Residues 14–268 (YEVQHLLGKG…LEQVLRHPFM (255 aa)) form the Protein kinase domain. ATP is bound by residues 20 to 28 (LGKGGFASV) and K43. Catalysis depends on D139, which acts as the Proton acceptor. A disordered region spans residues 311 to 336 (SNESRSSQRLRSIEKSAQSSSNPQML). In terms of domain architecture, Cryptic POLO box 1 (CPB1) spans 386–505 (EQQMRVPPLN…ARFVGLVKSK (120 aa)). Residues 506–613 (TPKITYFSSL…GRRPLTDVSH (108 aa)) form the Cryptic POLO box 2 (CPB2) domain. Positions 675-755 (PIKRINIPDV…IPQVKLRLKC (81 aa)) constitute a POLO box domain.

Belongs to the protein kinase superfamily. Ser/Thr protein kinase family. CDC5/Polo subfamily. As to quaternary structure, homodimer. Post-translationally, ubiquitinated by the SCF(Slimb) ubiquitin ligase complex; leading to its degradation by the proteasome during interphase and regulating centriole number and ensuring the block to centriole reduplication.

The protein resides in the cytoplasm. It localises to the cytoskeleton. The protein localises to the microtubule organizing center. Its subcellular location is the centrosome. It is found in the centriole. It carries out the reaction L-seryl-[protein] + ATP = O-phospho-L-seryl-[protein] + ADP + H(+). The enzyme catalyses L-threonyl-[protein] + ATP = O-phospho-L-threonyl-[protein] + ADP + H(+). In terms of biological role, serine/threonine-protein kinase that plays a central role in centriole duplication. Able to trigger procentriole formation on the surface of the mother centriole cylinder, using mother centriole as a platform, leading to the recruitment of centriole biogenesis proteins such as sas-6. When overexpressed, it is able to induce centrosome amplification through the simultaneous generation of multiple procentrioles adjoining each parental centriole during S phase. Centrosome amplification following overexpression can initiate tumorigenesis, highlighting the importance of centrosome regulation in cancers. The polypeptide is Serine/threonine-protein kinase PLK4 (SAK) (Drosophila willistoni (Fruit fly)).